We begin with the raw amino-acid sequence, 70 residues long: MLKMGVVLFIFLVLFPLATLQLDADQPVERYAKNKQLFNPHKRRGIILRAPGKRCCHWNWCDHLCSCCGS.

A signal peptide spans 1–24 (MLKMGVVLFIFLVLFPLATLQLDA). Positions 25 to 54 (DQPVERYAKNKQLFNPHKRRGIILRAPGKR) are excised as a propeptide. Disulfide bonds link Cys-55/Cys-67, Cys-56/Cys-68, and Cys-61/Cys-65.

The protein belongs to the conotoxin M superfamily. In terms of tissue distribution, expressed by the venom duct.

It localises to the secreted. Its function is as follows. In vitro, inhibits proliferation of the mice ovarian cancer cells ID8. This chain is Conotoxin Mr3.8, found in Conus marmoreus (Marble cone).